The following is a 661-amino-acid chain: Fusaric acid cluster transcription factor FUB12 (661 aa).

The segment at residues 17 to 48 (CVPCRTRKIKCNAAVVGLPCGSCVSRECPDEC) is a DNA-binding region (zn(2)-C6 fungal-type). Disordered stretches follow at residues 56-132 (RTVK…PPGQ) and 151-184 (SAAQ…PQLD). The span at 73–98 (PDTNGSVLSPRQQQLPTNVSRQATDS) shows a compositional bias: polar residues. Over residues 99 to 109 (SHSDPVEESIH) the composition is skewed to basic and acidic residues. Polar residues predominate over residues 110 to 119 (ASHTGSSLRN). A compositionally biased stretch (basic and acidic residues) spans 120–129 (DTPHSRDRRP).

It is found in the nucleus. Its function is as follows. Transcription factor that is involved in the formation of the two Fusaric acid derivatives, dehydrofusaric acid and fusarinolic acid, serving as a detoxification mechanism. In Gibberella moniliformis (strain M3125 / FGSC 7600) (Maize ear and stalk rot fungus), this protein is Fusaric acid cluster transcription factor FUB12.